Here is a 223-residue protein sequence, read N- to C-terminus: Adenylate kinase (223 aa).

10-15 contributes to the ATP binding site; it reads GSGKGT. Positions 30 to 59 are NMP; the sequence is ESGAIFRKHIGGGTELGMKAKEYIDKGELV. AMP contacts are provided by residues S31, R36, 57–59, 84–87, and Q91; these read ELV and GFPR. Positions 125–164 are LID; the sequence is GRRLCENDPNHPNNKFIDAIKPDGDKCRVCGGALSERADD. R126 contributes to the ATP binding site. The AMP site is built by R161 and R173. G209 contributes to the ATP binding site.

The protein belongs to the adenylate kinase family. Monomer.

It is found in the cytoplasm. It catalyses the reaction AMP + ATP = 2 ADP. It participates in purine metabolism; AMP biosynthesis via salvage pathway; AMP from ADP: step 1/1. Functionally, catalyzes the reversible transfer of the terminal phosphate group between ATP and AMP. Plays an important role in cellular energy homeostasis and in adenine nucleotide metabolism. In Maridesulfovibrio salexigens (strain ATCC 14822 / DSM 2638 / NCIMB 8403 / VKM B-1763) (Desulfovibrio salexigens), this protein is Adenylate kinase.